A 384-amino-acid polypeptide reads, in one-letter code: DNA dC-&gt;dU-editing enzyme APOBEC-3G (384 aa).

The interval Met1 to Ser60 is essential for cytoplasmic localization. CMP/dCMP-type deaminase domains lie at Arg29–Leu138 and Gly214–Leu328. Thr32 carries the post-translational modification Phosphothreonine; by PKA. His65, Cys97, and Cys100 together coordinate Zn(2+). The interval Glu209–Ser336 is necessary for homooligomerization. The segment at Arg213 to Arg215 is interaction with DNA. Position 218 is a phosphothreonine; by PKA and CAMK2 (Thr218). Position 257 (His257) interacts with Zn(2+). Glu259 (proton donor) is an active-site residue. The Zn(2+) site is built by Cys288 and Cys291. The segment at Arg313–Arg320 is interaction with DNA.

This sequence belongs to the cytidine and deoxycytidylate deaminase family. Homodimer. Homooligomer. Can bind RNA to form ribonucleoprotein complexes of high-molecular-mass (HMM) or low-molecular-mass (LMM). HMM is inactive and heterogeneous in protein composition because of binding nonselectively to cellular RNAs, which in turn are associated with variety of cellular proteins. The LMM form which is enzymatically active has few or no RNAs associated. Its ability to form homooligomer is distinct from its ability to assemble into HMM. Interacts with APOBEC3B, APOBEC3F, MOV10, AGO2, EIF4E, EIF4ENIF1, DCP2 and DDX6 in an RNA-dependent manner. Interacts with AGO1, AGO3 and PKA/PRKACA. The cofactor is Zn(2+).

It localises to the cytoplasm. Its subcellular location is the nucleus. The protein resides in the P-body. It catalyses the reaction a 2'-deoxycytidine in single-stranded DNA + H2O + H(+) = a 2'-deoxyuridine in single-stranded DNA + NH4(+). Functionally, DNA deaminase (cytidine deaminase) which acts as an inhibitor of retrovirus replication and retrotransposon mobility. After the penetration of retroviral nucleocapsids into target cells of infection and the initiation of reverse transcription, it can induce the conversion of cytosine to uracil in the minus-sense single-strand viral DNA, leading to G-to-A hypermutations in the subsequent plus-strand viral DNA. The resultant detrimental levels of mutations in the proviral genome, along with a deamination-independent mechanism that works prior to the proviral integration, together exert efficient antiretroviral effects in infected target cells. Selectively targets single-stranded DNA and does not deaminate double-stranded DNA or single- or double-stranded RNA. The chain is DNA dC-&gt;dU-editing enzyme APOBEC-3G (APOBEC3G) from Gorilla gorilla gorilla (Western lowland gorilla).